Here is a 149-residue protein sequence, read N- to C-terminus: Nucleoside diphosphate kinase (149 aa).

6 residues coordinate ATP: Lys9, Phe57, Arg85, Thr91, Arg102, and Asn112. His115 functions as the Pros-phosphohistidine intermediate in the catalytic mechanism.

The protein belongs to the NDK family. Mg(2+) is required as a cofactor.

Its subcellular location is the cytoplasm. The enzyme catalyses a 2'-deoxyribonucleoside 5'-diphosphate + ATP = a 2'-deoxyribonucleoside 5'-triphosphate + ADP. The catalysed reaction is a ribonucleoside 5'-diphosphate + ATP = a ribonucleoside 5'-triphosphate + ADP. In terms of biological role, major role in the synthesis of nucleoside triphosphates other than ATP. The ATP gamma phosphate is transferred to the NDP beta phosphate via a ping-pong mechanism, using a phosphorylated active-site intermediate. In Methanospirillum hungatei JF-1 (strain ATCC 27890 / DSM 864 / NBRC 100397 / JF-1), this protein is Nucleoside diphosphate kinase.